Reading from the N-terminus, the 436-residue chain is T-box transcription factor TBX6 (436 aa).

A DNA-binding region (T-box) is located at residues 100 to 273; sequence LWKEFSAVGT…ANPFAKGFRE (174 aa). Over residues 274-284 the composition is skewed to basic and acidic residues; that stretch reads NGRNCKRERDA. Disordered stretches follow at residues 274–344 and 360–383; these read NGRN…CGGP and PSHL…APYS. A compositionally biased stretch (low complexity) spans 332 to 344; it reads EAASASAPPCGGP.

Its subcellular location is the nucleus. T-box transcription factor that plays an essential role in the determination of the fate of axial stem cells: neural vs mesodermal. Acts in part by down-regulating, a specific enhancer (N1) of SOX2, to inhibit neural development. Seems to play also an essential role in left/right axis determination and acts through effects on Notch signaling around the node as well as through an effect on the morphology and motility of the nodal cilia. The protein is T-box transcription factor TBX6 (Tbx6) of Mus musculus (Mouse).